The chain runs to 385 residues: Anhydro-N-acetylmuramic acid kinase (385 aa).

12–19 (GTSLDGID) is an ATP binding site.

The protein belongs to the anhydro-N-acetylmuramic acid kinase family.

The catalysed reaction is 1,6-anhydro-N-acetyl-beta-muramate + ATP + H2O = N-acetyl-D-muramate 6-phosphate + ADP + H(+). Its pathway is amino-sugar metabolism; 1,6-anhydro-N-acetylmuramate degradation. It functions in the pathway cell wall biogenesis; peptidoglycan recycling. Catalyzes the specific phosphorylation of 1,6-anhydro-N-acetylmuramic acid (anhMurNAc) with the simultaneous cleavage of the 1,6-anhydro ring, generating MurNAc-6-P. Is required for the utilization of anhMurNAc either imported from the medium or derived from its own cell wall murein, and thus plays a role in cell wall recycling. The sequence is that of Anhydro-N-acetylmuramic acid kinase from Bacillus thuringiensis (strain Al Hakam).